Consider the following 326-residue polypeptide: MPSPHFSKVLVFGATGEVGSAVALEAHALGAHVSIALRDTTKHNEWISPSQEHAADLQRISADLTDPDSLKRAVHDTGAQAAFIYAVRSKDTLRGAITALRDAGIQYLVFLSTSQVRTAGTTKGDIRSIKPDHFIPWQHAQVEIALEELEVPHAAVRAGFFASNPLRIYLDRSSEPKQVNLLAPEVPHDPIDPKDIGRAAAAVLVNPRLYASGYQGEPKKDVVYLSGPALLSQTEQWEIINRELVAAGKPEVKVNHITVEQYLENLAKLHVPDVVAKSLAKSMVETRALYAPEDYEKSRGNVELLTGRKATAFDEFVKREIPRYFD.

Residues 13-18 (GATGEV) and 161-164 (FASN) each bind NADP(+).

This sequence belongs to the NmrA-type oxidoreductase family.

Its function is as follows. Nitrogen metabolite regulation-like protein involved in the regulation of the gene cluster that mediates the biosynthesis of bikaverin, a red pigment also considered as a mycotoxin. In Gibberella fujikuroi (strain CBS 195.34 / IMI 58289 / NRRL A-6831) (Bakanae and foot rot disease fungus), this protein is Nitrogen metabolite regulation-like protein bik4.